A 278-amino-acid polypeptide reads, in one-letter code: Sulfur carrier protein FdhD (278 aa).

C113 (cysteine persulfide intermediate) is an active-site residue. 251-256 serves as a coordination point for Mo-bis(molybdopterin guanine dinucleotide); sequence FCRNGR.

This sequence belongs to the FdhD family.

It localises to the cytoplasm. Its function is as follows. Required for formate dehydrogenase (FDH) activity. Acts as a sulfur carrier protein that transfers sulfur from IscS to the molybdenum cofactor prior to its insertion into FDH. In Shewanella oneidensis (strain ATCC 700550 / JCM 31522 / CIP 106686 / LMG 19005 / NCIMB 14063 / MR-1), this protein is Sulfur carrier protein FdhD.